Consider the following 167-residue polypeptide: Piercer of microtubule wall 1 protein (167 aa).

A disordered region spans residues 1–54; that stretch reads MSEEKPQQSAEEPEPGEPKAKPAPEEPEPGEPKAKPAPEEPEPGEPKAKPAPEK. The span at 16 to 54 shows a compositional bias: basic and acidic residues; sequence GEPKAKPAPEEPEPGEPKAKPAPEEPEPGEPKAKPAPEK.

This sequence belongs to the PIERCE1 family. In terms of assembly, microtubule inner protein component of sperm flagellar doublet microtubules. Interacts with CFAP53, ODAD1 and ODAD3; the interactions link the outer dynein arms docking complex (ODA-DC) to the internal microtubule inner proteins (MIP) in cilium axoneme. Expressed in brain, lung, kidney and testis.

It localises to the cytoplasm. Its subcellular location is the cytoskeleton. It is found in the cilium axoneme. The protein localises to the flagellum axoneme. Its function is as follows. Microtubule inner protein involved in the attachment of outer dynein arms (ODAs) to dynein-decorated doublet microtubules (DMTs) in cilia axoneme. Functions at the initial step of left-right asymmetry specification of the visceral organs. The sequence is that of Piercer of microtubule wall 1 protein from Mus musculus (Mouse).